The following is a 257-amino-acid chain: Probable ssDNA-binding protein (257 aa).

The disordered stretch occupies residues 222-257 (AFMEGRENKDDDAKSGNSNAGSQKGIDQEAASDLDD). Residues 225–235 (EGRENKDDDAK) show a composition bias toward basic and acidic residues.

In terms of biological role, required during DNA replication. Displaced viral DNA strands are transiently coated with the ssDNA-binding protein. It is then probably removed by the replisome that performs lagging strand synthesis or during the events that lead up to the recombination process. This chain is Probable ssDNA-binding protein (D11), found in Escherichia phage T5 (Enterobacteria phage T5).